We begin with the raw amino-acid sequence, 216 residues long: 3-keto-L-gulonate-6-phosphate decarboxylase UlaD (216 aa).

A substrate-binding site is contributed by aspartate 11. Positions 33 and 62 each coordinate Mg(2+). Arginine 192 is a binding site for substrate.

Belongs to the HPS/KGPDC family. KGPDC subfamily. In terms of assembly, homodimer. Requires Mg(2+) as cofactor.

It carries out the reaction 3-dehydro-L-gulonate 6-phosphate + H(+) = L-xylulose 5-phosphate + CO2. The protein operates within cofactor degradation; L-ascorbate degradation; D-xylulose 5-phosphate from L-ascorbate: step 2/4. Catalyzes the decarboxylation of 3-keto-L-gulonate-6-P into L-xylulose-5-P. Is involved in the anaerobic L-ascorbate utilization. This Shigella boydii serotype 18 (strain CDC 3083-94 / BS512) protein is 3-keto-L-gulonate-6-phosphate decarboxylase UlaD.